The following is a 487-amino-acid chain: Schwannomin-interacting protein 1 (487 aa).

4 disordered regions span residues 1–74 (MERS…VSAL), 88–221 (VIDE…PVPP), 236–260 (FREQEVRNQGQARTNSTSAQKNERE), and 308–354 (SGSD…SLDD). Over residues 14 to 27 (DQGKHSDSDYREDG) the composition is skewed to basic and acidic residues. A compositionally biased stretch (low complexity) spans 32 to 67 (SDAGSSSSSSRASSQSNSTKVTPCSECKSSSSPGGS). The span at 92 to 106 (WAPEEDGEEEEEEDE) shows a compositional bias: acidic residues. 2 stretches are compositionally biased toward basic and acidic residues: residues 107 to 123 (RDQRGYRDDRSPAREPG) and 153 to 162 (HQHDPQDLRH). Ser-117 bears the Phosphoserine mark. A compositionally biased stretch (polar residues) spans 242–255 (RNQGQARTNSTSAQ). Basic and acidic residues predominate over residues 309–323 (GSDKDSDADDSKTET). Positions 324–335 (SLDTPLSPMSKQ) are enriched in polar residues. Positions 344 to 354 (TTEEESESLDD) are enriched in acidic residues. Positions 424 to 458 (IGQLQVIVNDLHSQIESLNEELVQLLLIRDELHTE) form a coiled coil.

This sequence belongs to the SCHIP1 family. In terms of assembly, homooligomer (via coiled coil domain). Interacts with NF2; the interaction is direct. Interacts with ANK3. In terms of tissue distribution, preferentially expressed in brain, skeletal muscles and heart. Also expressed in detected in pancreas, kidney, liver, lung, and placenta.

It is found in the cytoplasm. The polypeptide is Schwannomin-interacting protein 1 (Homo sapiens (Human)).